Here is a 558-residue protein sequence, read N- to C-terminus: 2-isopropylmalate synthase (558 aa).

The region spanning 28 to 304 (PIWCSVDLRD…DPELEFSNLN (277 aa)) is the Pyruvate carboxyltransferase domain. Residues Asp-37, His-243, His-245, and Asn-279 each contribute to the Mg(2+) site. Residues 438-558 (NRSPYYLKNY…VSALNRSKLK (121 aa)) form a regulatory domain region.

The protein belongs to the alpha-IPM synthase/homocitrate synthase family. LeuA type 2 subfamily. Homodimer. It depends on Mg(2+) as a cofactor.

It is found in the cytoplasm. It carries out the reaction 3-methyl-2-oxobutanoate + acetyl-CoA + H2O = (2S)-2-isopropylmalate + CoA + H(+). The protein operates within amino-acid biosynthesis; L-leucine biosynthesis; L-leucine from 3-methyl-2-oxobutanoate: step 1/4. Functionally, catalyzes the condensation of the acetyl group of acetyl-CoA with 3-methyl-2-oxobutanoate (2-ketoisovalerate) to form 3-carboxy-3-hydroxy-4-methylpentanoate (2-isopropylmalate). The chain is 2-isopropylmalate synthase from Clostridium acetobutylicum (strain ATCC 824 / DSM 792 / JCM 1419 / IAM 19013 / LMG 5710 / NBRC 13948 / NRRL B-527 / VKM B-1787 / 2291 / W).